The following is a 172-amino-acid chain: Zinc finger C2HC domain-containing protein 1B (172 aa).

2 consecutive C2HC/C3H-type zinc fingers follow at residues 14–43 and 117–146; these read KLFP…VFNK and DYIQ…QTSR. Zn(2+)-binding residues include Cys-18, Cys-21, His-33, Cys-37, Cys-121, Cys-124, His-136, and Cys-140.

The protein belongs to the ZC2HC1 family. Zn(2+) is required as a cofactor.

This Mus musculus (Mouse) protein is Zinc finger C2HC domain-containing protein 1B (Zc2hc1b).